The chain runs to 248 residues: Inner membrane protein pE248R (248 aa).

A lipid anchor (N-myristoyl glycine; by host) is attached at Gly2. At 2-199 the chain is on the cytoplasmic side; sequence GGSTSKNSFK…ADAISAVFKN (198 aa). A helical transmembrane segment spans residues 200 to 220; the sequence is IMVAAVVIVLIIVGFIAVFYF. Residues 221-248 lie on the Extracellular side of the membrane; sequence LHSRHRHEEEEEAEPLISNKVLKNAAVS.

The protein belongs to the asfivirus E248R family. As to quaternary structure, interacts with A151R.

The protein resides in the host membrane. It localises to the virion membrane. Functionally, essential for viral fusion with host endosomal membrane and core release. The chain is Inner membrane protein pE248R from Ornithodoros (relapsing fever ticks).